We begin with the raw amino-acid sequence, 358 residues long: Protein RecA (358 aa).

78–85 (GPESGGKT) lines the ATP pocket.

The protein belongs to the RecA family.

The protein localises to the cytoplasm. In terms of biological role, can catalyze the hydrolysis of ATP in the presence of single-stranded DNA, the ATP-dependent uptake of single-stranded DNA by duplex DNA, and the ATP-dependent hybridization of homologous single-stranded DNAs. It interacts with LexA causing its activation and leading to its autocatalytic cleavage. This Deinococcus geothermalis (strain DSM 11300 / CIP 105573 / AG-3a) protein is Protein RecA.